The sequence spans 436 residues: GTPase Der (436 aa).

2 EngA-type G domains span residues proline 4 to glutamine 167 and isoleucine 176 to arginine 351. GTP-binding positions include glycine 10–serine 17, aspartate 57–isoleucine 61, asparagine 119–aspartate 122, glycine 182–serine 189, aspartate 229–methionine 233, and asparagine 294–aspartate 297. The region spanning lysine 352 to asparagine 436 is the KH-like domain.

The protein belongs to the TRAFAC class TrmE-Era-EngA-EngB-Septin-like GTPase superfamily. EngA (Der) GTPase family. Associates with the 50S ribosomal subunit.

In terms of biological role, GTPase that plays an essential role in the late steps of ribosome biogenesis. The chain is GTPase Der from Macrococcus caseolyticus (strain JCSC5402) (Macrococcoides caseolyticum).